A 339-amino-acid polypeptide reads, in one-letter code: Anthranilate phosphoribosyltransferase (339 aa).

5-phospho-alpha-D-ribose 1-diphosphate is bound by residues Gly82, 85-86 (GD), Thr90, 92-95 (NIST), 110-118 (KHGNRSASG), and Ser122. Gly82 provides a ligand contact to anthranilate. Position 94 (Ser94) interacts with Mg(2+). Residue Asn113 participates in anthranilate binding. Arg168 is a binding site for anthranilate. Mg(2+) contacts are provided by Asp226 and Glu227.

Belongs to the anthranilate phosphoribosyltransferase family. Homodimer. Requires Mg(2+) as cofactor.

It catalyses the reaction N-(5-phospho-beta-D-ribosyl)anthranilate + diphosphate = 5-phospho-alpha-D-ribose 1-diphosphate + anthranilate. It participates in amino-acid biosynthesis; L-tryptophan biosynthesis; L-tryptophan from chorismate: step 2/5. Functionally, catalyzes the transfer of the phosphoribosyl group of 5-phosphorylribose-1-pyrophosphate (PRPP) to anthranilate to yield N-(5'-phosphoribosyl)-anthranilate (PRA). The protein is Anthranilate phosphoribosyltransferase of Methanosphaerula palustris (strain ATCC BAA-1556 / DSM 19958 / E1-9c).